Consider the following 502-residue polypeptide: Probable malate:quinone oxidoreductase (502 aa).

The protein belongs to the MQO family. Requires FAD as cofactor.

The catalysed reaction is (S)-malate + a quinone = a quinol + oxaloacetate. Its pathway is carbohydrate metabolism; tricarboxylic acid cycle; oxaloacetate from (S)-malate (quinone route): step 1/1. This is Probable malate:quinone oxidoreductase from Oceanobacillus iheyensis (strain DSM 14371 / CIP 107618 / JCM 11309 / KCTC 3954 / HTE831).